We begin with the raw amino-acid sequence, 353 residues long: Putative glycosyltransferase TagX (353 aa).

Belongs to the glycosyltransferase 2 family.

The protein is Putative glycosyltransferase TagX (tagX) of Staphylococcus aureus (strain MRSA252).